The sequence spans 623 residues: Phosphomethylpyrimidine synthase (623 aa).

Substrate-binding positions include Asn221, Met250, Tyr279, His315, 335-337, 376-379, and Glu415; these read SRG and DGLR. His419 provides a ligand contact to Zn(2+). Tyr442 is a substrate binding site. Zn(2+) is bound at residue His483. The [4Fe-4S] cluster site is built by Cys563, Cys566, and Cys571.

It belongs to the ThiC family. Homodimer. It depends on [4Fe-4S] cluster as a cofactor.

The enzyme catalyses 5-amino-1-(5-phospho-beta-D-ribosyl)imidazole + S-adenosyl-L-methionine = 4-amino-2-methyl-5-(phosphooxymethyl)pyrimidine + CO + 5'-deoxyadenosine + formate + L-methionine + 3 H(+). Its pathway is cofactor biosynthesis; thiamine diphosphate biosynthesis. Catalyzes the synthesis of the hydroxymethylpyrimidine phosphate (HMP-P) moiety of thiamine from aminoimidazole ribotide (AIR) in a radical S-adenosyl-L-methionine (SAM)-dependent reaction. This Parvibaculum lavamentivorans (strain DS-1 / DSM 13023 / NCIMB 13966) protein is Phosphomethylpyrimidine synthase.